A 71-amino-acid polypeptide reads, in one-letter code: Small ribosomal subunit protein bS21 (71 aa).

Residues 49–59 show a composition bias toward basic residues; it reads AAAAVKRHAKK. The disordered stretch occupies residues 49–71; that stretch reads AAAAVKRHAKKVQREQRRSVRLY. Basic and acidic residues predominate over residues 60–71; the sequence is VQREQRRSVRLY.

It belongs to the bacterial ribosomal protein bS21 family.

The protein is Small ribosomal subunit protein bS21 of Stutzerimonas stutzeri (strain A1501) (Pseudomonas stutzeri).